A 383-amino-acid polypeptide reads, in one-letter code: Ovalbumin (383 aa).

Glycine 2 carries the N-acetylglycine modification. Positions histidine 22–aspartate 48 form a signal peptide, not cleaved. Serine 69 carries the post-translational modification Phosphoserine. A disulfide bridge connects residues cysteine 74 and cysteine 121. Residues asparagine 293 and asparagine 312 are each glycosylated (N-linked (GlcNAc...) asparagine). Phosphoserine is present on serine 345.

This sequence belongs to the serpin family. Ov-serpin subfamily. In terms of processing, the signal sequence is not cleaved. The functional signal for membrane translocation of ovalbumin becomes accessible when the nascent chain is 50 to 60 residues long. The hydrophobic sequence which lies between residues 27 and 43 folds back on the preceding residues to form an amphipathic hairpin structure which is the signal element recognized by the membrane. In terms of tissue distribution, major protein of egg white.

The protein resides in the secreted. Storage protein of egg white. Lack protease inhibitory activity. This Coturnix coturnix (Common quail) protein is Ovalbumin (SERPINB14).